Consider the following 2184-residue polypeptide: Genome polyprotein (2184 aa).

Gly2 carries the N-myristoyl glycine; by host lipid modification. The Cytoplasmic portion of the chain corresponds to 2–1494; that stretch reads GAQVSTQKTG…HVSRAFICLQ (1493 aa). The tract at residues 567-583 is amphipathic alpha-helix; sequence FYQGDVQNAVEGAMVRV. Active-site for protease 2A activity residues include His871 and Asp889. Zn(2+) is bound by residues Cys906 and Cys908. Cys960 (for protease 2A activity) is an active-site residue. 2 residues coordinate Zn(2+): Cys966 and His968. Residues 1100–1172 are membrane-binding; sequence NNGWLKKFTE…EQSAPSQGDQ (73 aa). Positions 1100 to 1238 are oligomerization; the sequence is NNGWLKKFTE…SPGAGKSVAT (139 aa). The interval 1121 to 1125 is RNA-binding; the sequence is AIKIQ. Positions 1204–1360 constitute an SF3 helicase domain; the sequence is EKKMSNYIQF…SMYSQNGKIN (157 aa). 3 residues coordinate Zn(2+): Cys1368, Cys1380, and Cys1385. Residues 1368–1385 form a C4-type; degenerate zinc finger; the sequence is CDEDCCPVNFKKCCPLVC. The interval 1412-1419 is RNA-binding; that stretch reads EYNHRHSV. The tract at residues 1423–1428 is oligomerization; the sequence is LEALFQ. Residues 1495-1510 lie within the membrane without spanning it; it reads ALTTFVSVAGIIYIIY. Over 1511 to 2184 the chain is Cytoplasmic; the sequence is KLFAGFQGAY…TLRRKWLDSF (674 aa). Residue Tyr1520 is modified to O-(5'-phospho-RNA)-tyrosine. Residues 1540–1718 enclose the Peptidase C3 domain; the sequence is GPAFEFAVAM…FSAALLRHYF (179 aa). Active-site for protease 3C activity residues include His1579, Glu1610, and Cys1686. The region spanning 1949–2065 is the RdRp catalytic domain; sequence GHLIAFDYSG…SYPWPIDASL (117 aa). Mg(2+) contacts are provided by Asp1955 and Asp2051.

The protein belongs to the picornaviruses polyprotein family. As to quaternary structure, interacts with capsid protein VP1 and capsid protein VP3 to form heterotrimeric protomers. Interacts with capsid protein VP0, and capsid protein VP3 to form heterotrimeric protomers. Five protomers subsequently associate to form pentamers which serve as building blocks for the capsid. Interacts with capsid protein VP2, capsid protein VP3 and capsid protein VP4 following cleavage of capsid protein VP0. In terms of assembly, interacts with capsid protein VP1 and capsid protein VP3 in the mature capsid. As to quaternary structure, interacts with capsid protein VP0 and capsid protein VP1 to form heterotrimeric protomers. Five protomers subsequently associate to form pentamers which serve as building blocks for the capsid. Interacts with capsid protein VP4 in the mature capsid. Interacts with protein 2C; this interaction may be important for virion morphogenesis. Interacts with capsid protein VP1 and capsid protein VP3. In terms of assembly, homodimer. As to quaternary structure, homohexamer; forms a hexameric ring structure with 6-fold symmetry characteristic of AAA+ ATPases. Interacts (via N-terminus) with host RTN3 (via reticulon domain); this interaction is important for viral replication. Interacts with capsid protein VP3; this interaction may be important for virion morphogenesis. Interacts with protein 3CD. In terms of assembly, homodimer. Interacts with host GBF1. Interacts (via GOLD domain) with host ACBD3 (via GOLD domain); this interaction allows the formation of a viral protein 3A/ACBD3 heterotetramer with a 2:2 stoichiometry, which will stimulate the recruitment of host PI4KB in order to synthesize PI4P at the viral RNA replication sites. As to quaternary structure, interacts with RNA-directed RNA polymerase. Interacts with protein 3AB and with RNA-directed RNA polymerase. In terms of assembly, interacts with Viral protein genome-linked and with protein 3CD. Mg(2+) serves as cofactor. In terms of processing, specific enzymatic cleavages in vivo by the viral proteases yield processing intermediates and the mature proteins. Post-translationally, myristoylation is required for the formation of pentamers during virus assembly. Further assembly of 12 pentamers and a molecule of genomic RNA generates the provirion. During virion maturation, immature virions are rendered infectious following cleavage of VP0 into VP4 and VP2. This maturation seems to be an autocatalytic event triggered by the presence of RNA in the capsid and it is followed by a conformational change infectious virion. In terms of processing, myristoylation is required during RNA encapsidation and formation of the mature virus particle. Post-translationally, VPg is uridylylated by the polymerase into VPg-pUpU. This acts as a nucleotide-peptide primer for the genomic RNA replication.

The protein localises to the virion. Its subcellular location is the host cytoplasm. It is found in the host cytoplasmic vesicle membrane. It localises to the host nucleus. It carries out the reaction a ribonucleoside 5'-triphosphate + H2O = a ribonucleoside 5'-diphosphate + phosphate + H(+). The catalysed reaction is Selective cleavage of Tyr-|-Gly bond in the picornavirus polyprotein.. It catalyses the reaction RNA(n) + a ribonucleoside 5'-triphosphate = RNA(n+1) + diphosphate. The enzyme catalyses Selective cleavage of Gln-|-Gly bond in the poliovirus polyprotein. In other picornavirus reactions Glu may be substituted for Gln, and Ser or Thr for Gly.. With respect to regulation, replication or transcription is subject to high level of random mutations by the nucleotide analog ribavirin. Forms an icosahedral capsid of pseudo T=3 symmetry with capsid proteins VP2 and VP3. The capsid is 300 Angstroms in diameter, composed of 60 copies of each capsid protein and enclosing the viral positive strand RNA genome. Capsid protein VP1 mainly forms the vertices of the capsid. Capsid protein VP1 interacts with host ITGA2/ITGB1 to provide virion attachment to target host cells. This attachment induces virion internalization predominantly through caveolin-mediated endocytosis. Tyrosine kinases are probably involved in the entry process. After binding to its receptor, the capsid undergoes conformational changes. Capsid protein VP1 N-terminus (that contains an amphipathic alpha-helix) and capsid protein VP4 are externalized. Together, they shape a pore in the host membrane through which viral genome is translocated to host cell cytoplasm. Its function is as follows. Forms an icosahedral capsid of pseudo T=3 symmetry with capsid proteins VP2 and VP3. The capsid is 300 Angstroms in diameter, composed of 60 copies of each capsid protein and enclosing the viral positive strand RNA genome. Functionally, lies on the inner surface of the capsid shell. After binding to the host receptor, the capsid undergoes conformational changes. Capsid protein VP4 is released, Capsid protein VP1 N-terminus is externalized, and together, they shape a pore in the host membrane through which the viral genome is translocated into the host cell cytoplasm. In terms of biological role, component of immature procapsids, which is cleaved into capsid proteins VP4 and VP2 after maturation. Allows the capsid to remain inactive before the maturation step. Cysteine protease that cleaves viral polyprotein and specific host proteins. It is responsible for the autocatalytic cleavage between the P1 and P2 regions, which is the first cleavage occurring in the polyprotein. Also cleaves the host translation initiation factor EIF4G1, in order to shut down the capped cellular mRNA translation. Inhibits the host nucleus-cytoplasm protein and RNA trafficking by cleaving host members of the nuclear pores. Counteracts stress granule formation probably by antagonizing its assembly or promoting its dissassembly. Its function is as follows. Plays an essential role in the virus replication cycle by acting as a viroporin. Creates a pore in the host endoplasmic reticulum and as a consequence releases Ca2+ in the cytoplasm of infected cell. In turn, high levels of cytoplasmic calcium may trigger membrane trafficking and transport of viral ER-associated proteins to viroplasms, sites of viral genome replication. Functionally, induces and associates with structural rearrangements of intracellular membranes. Displays RNA-binding, nucleotide binding and NTPase activities. May play a role in virion morphogenesis and viral RNA encapsidation by interacting with the capsid protein VP3. In terms of biological role, localizes the viral replication complex to the surface of membranous vesicles. Together with protein 3CD binds the Cis-Active RNA Element (CRE) which is involved in RNA synthesis initiation. Acts as a cofactor to stimulate the activity of 3D polymerase, maybe through a nucleid acid chaperone activity. Localizes the viral replication complex to the surface of membranous vesicles. It inhibits host cell endoplasmic reticulum-to-Golgi apparatus transport and causes the disassembly of the Golgi complex, possibly through GBF1 interaction. This would result in depletion of MHC, trail receptors and IFN receptors at the host cell surface. Plays an essential role in viral RNA replication by recruiting ACBD3 and PI4KB at the viral replication sites, thereby allowing the formation of the rearranged membranous structures where viral replication takes place. Its function is as follows. Acts as a primer for viral RNA replication and remains covalently bound to viral genomic RNA. VPg is uridylylated prior to priming replication into VPg-pUpU. The oriI viral genomic sequence may act as a template for this. The VPg-pUpU is then used as primer on the genomic RNA poly(A) by the RNA-dependent RNA polymerase to replicate the viral genome. During genome replication, the VPg-RNA linkage is removed by the host TDP2, thereby accelerating replication. During the late stage of the replication cycle, host TDP2 is excluded from sites of viral RNA synthesis and encapsidation, allowing for the generation of progeny virions. Functionally, involved in the viral replication complex and viral polypeptide maturation. It exhibits protease activity with a specificity and catalytic efficiency that is different from protease 3C. Protein 3CD lacks polymerase activity. Protein 3CD binds to the 5'UTR of the viral genome. In terms of biological role, replicates the viral genomic RNA on the surface of intracellular membranes. May form linear arrays of subunits that propagate along a strong head-to-tail interaction called interface-I. Covalently attaches UMP to a tyrosine of VPg, which is used to prime RNA synthesis. The positive stranded RNA genome is first replicated at virus induced membranous vesicles, creating a dsRNA genomic replication form. This dsRNA is then used as template to synthesize positive stranded RNA genomes. ss(+)RNA genomes are either translated, replicated or encapsidated. Major viral protease that mediates proteolytic processing of the polyprotein. Cleaves host EIF5B, contributing to host translation shutoff. Also cleaves host PABPC1, contributing to host translation shutoff. Cleaves host NLRP1, triggers host N-glycine-mediated degradation of the autoinhibitory NLRP1 N-terminal fragment. The polypeptide is Genome polyprotein (Homo sapiens (Human)).